We begin with the raw amino-acid sequence, 357 residues long: 3-dehydroquinate synthase (357 aa).

NAD(+) contacts are provided by residues 104 to 108 (GVVGD), 128 to 129 (TT), Lys-141, and 168 to 171 (FLET). Residues Glu-183, His-243, and His-260 each coordinate Zn(2+).

This sequence belongs to the sugar phosphate cyclases superfamily. Dehydroquinate synthase family. Co(2+) is required as a cofactor. Requires Zn(2+) as cofactor. NAD(+) serves as cofactor.

It is found in the cytoplasm. The catalysed reaction is 7-phospho-2-dehydro-3-deoxy-D-arabino-heptonate = 3-dehydroquinate + phosphate. It functions in the pathway metabolic intermediate biosynthesis; chorismate biosynthesis; chorismate from D-erythrose 4-phosphate and phosphoenolpyruvate: step 2/7. Its function is as follows. Catalyzes the conversion of 3-deoxy-D-arabino-heptulosonate 7-phosphate (DAHP) to dehydroquinate (DHQ). The sequence is that of 3-dehydroquinate synthase from Streptococcus pyogenes serotype M5 (strain Manfredo).